The following is a 274-amino-acid chain: 2,3,4,5-tetrahydropyridine-2,6-dicarboxylate N-succinyltransferase (274 aa).

Residues arginine 104 and aspartate 141 each contribute to the substrate site.

The protein belongs to the transferase hexapeptide repeat family. In terms of assembly, homotrimer.

Its subcellular location is the cytoplasm. The catalysed reaction is (S)-2,3,4,5-tetrahydrodipicolinate + succinyl-CoA + H2O = (S)-2-succinylamino-6-oxoheptanedioate + CoA. It participates in amino-acid biosynthesis; L-lysine biosynthesis via DAP pathway; LL-2,6-diaminopimelate from (S)-tetrahydrodipicolinate (succinylase route): step 1/3. Its activity is regulated as follows. Inhibited by p-(chloromercuri)benzenesulfonic acid and cobalt. The sequence is that of 2,3,4,5-tetrahydropyridine-2,6-dicarboxylate N-succinyltransferase (dapD) from Unknown prokaryotic organism.